The chain runs to 541 residues: EH domain-containing protein 4 (541 aa).

N-acetylmethionine is present on Met-1. A disordered region spans residues 1–20 (MFSWMGRQAGGRERSGGMDA). Ser-15 is modified (phosphoserine). The Dynamin-type G domain maps to 58–289 (FENKPMILLV…DLFRDIQSLP (232 aa)). A G1 motif region spans residues 68–75 (GQYSTGKT). 68–75 (GQYSTGKT) contacts ATP. The G2 motif stretch occupies residues 94–95 (EP). A G3 motif region spans residues 156–159 (DSPG). The residue at position 162 (Ser-162) is a Phosphoserine. The interval 222–225 (NKAD) is G4 motif. Residue Lys-223 coordinates ATP. Position 246 (Val-246) is a region of interest, G5 motif. ATP is bound at residue Trp-261. Residues 447–535 (DKPVYDELFY…PHLVPPSHRK (89 aa)) enclose the EH domain. Tyr-451 is subject to Phosphotyrosine. Ser-459 bears the Phosphoserine mark. Positions 479 to 514 (LPNSVLGKIWKLADCDCDGMLDEEEFALAKHLIKIK) constitute an EF-hand domain. 5 residues coordinate Ca(2+): Asp-492, Asp-494, Asp-496, Met-498, and Glu-503.

This sequence belongs to the TRAFAC class dynamin-like GTPase superfamily. Dynamin/Fzo/YdjA family. EHD subfamily. Homooligomer, and heterooligomer with EHD1, EHD2 and EHD3. Forms a complex with EHD4 and MICALL1; the complex controls CDH5 trafficking and coordinates angiogenesis.

The protein localises to the early endosome membrane. It localises to the recycling endosome membrane. Its subcellular location is the cell membrane. It is found in the cell junction. The protein resides in the adherens junction. Its function is as follows. ATP- and membrane-binding protein that probably controls membrane reorganization/tubulation upon ATP hydrolysis. Plays a role in early endosomal transport. During sprouting angiogenesis, in complex with PACSIN2 and MICALL1, forms recycling endosome-like tubular structure at asymmetric adherens junctions to control CDH5 trafficking. This chain is EH domain-containing protein 4, found in Mus musculus (Mouse).